An 802-amino-acid chain; its full sequence is Ribosome-releasing factor 2, mitochondrial (802 aa).

The 285-residue stretch at 13–297 (KKIRNIGIIA…AVVDFLPSPA (285 aa)) folds into the tr-type G domain. Residues 22–29 (AHIDAGKT), 86–90 (DTPGH), and 140–143 (NKMD) each bind GTP.

It belongs to the TRAFAC class translation factor GTPase superfamily. Classic translation factor GTPase family. EF-G/EF-2 subfamily.

The protein resides in the mitochondrion. Mitochondrial GTPase that mediates the disassembly of ribosomes from messenger RNA at the termination of mitochondrial protein biosynthesis. Not involved in the GTP-dependent ribosomal translocation step during translation elongation. This Yarrowia lipolytica (strain CLIB 122 / E 150) (Yeast) protein is Ribosome-releasing factor 2, mitochondrial.